The sequence spans 528 residues: MNFDKEKCDEWEKIRLNSSPKNPFTKRNVKKDGPTYKKIDLICKHNVVGGNVVDLNKLCLKWLKDNHPNVKIPKSKSPPKVKSPKRKKSPVRRRVSSPLLTDDEDDVLNLQYDYLLSYRSVASEEITNYLRQTINDKTITAGNACMSNTKTLLKYFTNVKAVGKGSFGTVYIGNINIKNNVFSIAIKEGQISGLEANRAKKLQFPVEYLFNQMMNNILNNKMCPSFNYTYCIHFCDHCEVVSAIFKNPKTKSKITTCSVTMVEKADSDLIGLTSLDAQLSALFQILAAVHCIHKLYGIQHCDIKIENVLKKNIPKQANEYFRYSLDGVNYFVPNTGFVAILNDFGVSFSTSPKISTSYFGVRNAKVVFNNNSYKFQSFTTQRYPQENKWGKIETLSPPPRLRGPGGAKLTLNKFMKNFDSKPSIFVDLEDFQKFPTFGMYQDIQDVVRMFVGGKQTVQPGSHTEMRGLQPQAKKAILPFVEKLAPTSIWPEDKVELFLANVLIHKIFTQFGYTNAPPNAIILETYKLP.

The tract at residues 70 to 96 (VKIPKSKSPPKVKSPKRKKSPVRRRVS) is disordered. Basic residues predominate over residues 73–95 (PKSKSPPKVKSPKRKKSPVRRRV). Residues 156–507 (FTNVKAVGKG…LANVLIHKIF (352 aa)) form the Protein kinase domain. ATP is bound by residues 162-170 (VGKGSFGTV) and Lys-187. Residue Asp-302 is the Proton acceptor of the active site.

It belongs to the protein kinase superfamily. Ser/Thr protein kinase family.

It carries out the reaction L-seryl-[protein] + ATP = O-phospho-L-seryl-[protein] + ADP + H(+). The catalysed reaction is L-threonyl-[protein] + ATP = O-phospho-L-threonyl-[protein] + ADP + H(+). This is Probable serine/threonine-protein kinase 380R from Invertebrate iridescent virus 6 (IIV-6).